A 334-amino-acid polypeptide reads, in one-letter code: Thioredoxin reductase aclT (334 aa).

FAD is bound by residues 16–19, 38–43, Ile-93, Ala-122, Asp-294, and 302–303; these read GGPA, NASIDR, and TL.

This sequence belongs to the class-II pyridine nucleotide-disulfide oxidoreductase family. Homodimer. FAD is required as a cofactor.

It functions in the pathway mycotoxin biosynthesis. Functionally, thioredoxin reductase; part of the gene cluster that mediates the biosynthesis of aspirochlorine (or antibiotic A30641), an unusual halogenated spiro compound with distinctive antifungal properties due to selective inhibition of protein biosynthesis, and which is also active against bacteria, viruses, and murine tumor cells. The non-ribosomal peptide synthetase (NRPS) aclP is responsible the formation of the diketopiperazine (DKP) core from the condensation of 2 phenylalanine residues. One Phe residue is tailored into chlorotyrosine by hydroxylation and chlorination, whereas the second Phe undergoes an unprecedented C-C bond cleavage to be converted into glycine. After formation of the DKP, sulfur is incorporated into the DKP by conjugation with glutathione by aclG, followed by its stepwise degradation to the thiol by aclI, aclJ and aclK, and the dithiol oxidation by aclT. In addition, oxygenases (aclB, aclC, aclL and aclO) and O-methyltransferases (aclM and aclU) act as tailoring enzymes to produce the intermediate dechloroaspirochlorine. Ultimately, chlorination of dechloroaspirochlorine by the halogenase aclH is the last step in the aspirochlorine pathway. The polypeptide is Thioredoxin reductase aclT (Aspergillus oryzae (strain ATCC 42149 / RIB 40) (Yellow koji mold)).